Reading from the N-terminus, the 501-residue chain is ADP,ATP carrier protein 3 (501 aa).

12 consecutive transmembrane segments (helical) span residues 23–43, 59–79, 90–110, 146–166, 183–203, 227–247, 293–313, 326–346, 361–381, 387–407, 446–466, and 470–490; these read LKLF…FGAL, IISF…TVLY, YIFY…AYII, YALM…LMFW, PVLG…LVFF, IMLQ…MLLF, IALL…PWKA, VNFM…FMII, LLTP…IIFI, CFGD…QNIL, FGKS…PTAT, and IIIY…WNVI.

This sequence belongs to the ADP/ATP translocase tlc family.

It is found in the cell membrane. Provides the rickettsial cell with host ATP in exchange for rickettsial ADP. This is an obligate exchange system. This energy acquiring activity is an important component of rickettsial parasitism. This chain is ADP,ATP carrier protein 3 (tlcC), found in Rickettsia conorii (strain ATCC VR-613 / Malish 7).